Here is a 712-residue protein sequence, read N- to C-terminus: Polyribonucleotide nucleotidyltransferase (712 aa).

Positions 493 and 499 each coordinate Mg(2+). The 60-residue stretch at 560–619 (PRLLTFKVDPEDIGKIIGPGGKTVRGITEATGAKVDISDDGTITVSSSVGGQAEAARAMI) folds into the KH domain. Residues 629-697 (GQVYLGKVTR…HKGRINLTRL (69 aa)) enclose the S1 motif domain.

This sequence belongs to the polyribonucleotide nucleotidyltransferase family. It depends on Mg(2+) as a cofactor.

The protein localises to the cytoplasm. It carries out the reaction RNA(n+1) + phosphate = RNA(n) + a ribonucleoside 5'-diphosphate. Its function is as follows. Involved in mRNA degradation. Catalyzes the phosphorolysis of single-stranded polyribonucleotides processively in the 3'- to 5'-direction. The sequence is that of Polyribonucleotide nucleotidyltransferase from Synechococcus sp. (strain JA-2-3B'a(2-13)) (Cyanobacteria bacterium Yellowstone B-Prime).